A 320-amino-acid chain; its full sequence is Ferrochelatase (320 aa).

Residues His194 and Glu275 each coordinate Fe cation.

The protein belongs to the ferrochelatase family. In terms of assembly, monomer.

The protein resides in the cytoplasm. It carries out the reaction heme b + 2 H(+) = protoporphyrin IX + Fe(2+). It participates in porphyrin-containing compound metabolism; protoheme biosynthesis; protoheme from protoporphyrin-IX: step 1/1. Functionally, catalyzes the ferrous insertion into protoporphyrin IX. The sequence is that of Ferrochelatase from Salmonella arizonae (strain ATCC BAA-731 / CDC346-86 / RSK2980).